The chain runs to 738 residues: YTH domain-containing protein 1 (738 aa).

Over residues 1-12 the composition is skewed to basic and acidic residues; that stretch reads MAADSREEKDGE. Residues 1-341 form a disordered region; that stretch reads MAADSREEKD…KHEKLSSSVR (341 aa). A Phosphoserine modification is found at serine 35. Positions 50–59 are enriched in basic and acidic residues; that stretch reads ERMESIDTKR. The segment covering 63-90 has biased composition (polar residues); sequence SIHSRQLISKPLSSSVSNNKRIVSTKGK. The segment covering 91-115 has biased composition (basic and acidic residues); sequence SVTEYKNEEYQRSERNKRLDADRKI. Residue lysine 96 forms a Glycyl lysine isopeptide (Lys-Gly) (interchain with G-Cter in SUMO2) linkage. A phosphoserine mark is found at serine 118 and serine 120. Residues 124–144 show a composition bias toward basic and acidic residues; the sequence is EPYKSQPEKPCLRKRDSERRA. Residue serine 146 is modified to Phosphoserine. At threonine 148 the chain carries Phosphothreonine. Composition is skewed to basic and acidic residues over residues 151–163 and 170–185; these read GSERIGLEVDRRA and SKEEGNSEEYGSDHET. A compositionally biased stretch (polar residues) spans 186–197; the sequence is GSSASSEQGNNT. Over residues 198–257 the composition is skewed to acidic residues; sequence ENEEEGGEEDVEEDEEVDEDGDDDEEVDEDAEEEEDEEEDEEEEDEEEEEEEEEEYEQDE. Residues 258-273 are compositionally biased toward basic and acidic residues; it reads RDQKEEGNDYDTRSEA. Over residues 283–292 the composition is skewed to polar residues; the sequence is FTDGSVRSGS. 5 positions are modified to phosphoserine: serine 311, serine 318, serine 320, serine 321, and serine 323. A compositionally biased stretch (low complexity) spans 318-328; sequence SGSSASESYAG. In terms of domain architecture, YTH spans 358 to 495; the sequence is ARFFLIKSNN…ECGTQLCLLF (138 aa). RNA is bound by residues 364–366 and tryptophan 380; that span reads KSN. Serine 427 carries the phosphoserine modification. Residue tryptophan 431 coordinates RNA. Phosphoserine is present on serine 438. Residue aspartate 479 coordinates RNA. The span at 512 to 526 shows a compositional bias: basic residues; that stretch reads HKRRMHSQPRSRGRP. Disordered regions lie at residues 512-566, 618-654, and 680-738; these read HKRR…RPGY, GMPPYPGIEQPPHHPYYQHHAPPPQAHPPYSGHHPVP, and AVVS…RYRR. Residues 527-566 are compositionally biased toward basic and acidic residues; the sequence is SRREPVRDVGRRRPEDYDIHNSRKKPRIDYPPEFHQRPGY. Position 548 is a phosphoserine (serine 548). Basic and acidic residues predominate over residues 690–738; the sequence is RERDRERERDRPRDNRRDRERDRGRDRERERERICDRDRDRGERGRYRR.

Interacts with SRSF1. Interacts with SRSF2. Interacts with SRSF3. Interacts with SRSF7. Interacts with SRSF10. Interacts with CPSF6. Interacts with KHDRBS1/SAM68. Interacts with TRA2B. Interacts with KHDRBS3. Interacts with EMD. Interacts with RBMX. Interacts with ZCCHC8. Tyrosine phosphorylated. In terms of tissue distribution, ubiquitous.

The protein localises to the nucleus. It is found in the nucleus speckle. Functionally, regulator of alternative splicing that specifically recognizes and binds N6-methyladenosine (m6A)-containing RNAs. M6A is a modification present at internal sites of mRNAs and some non-coding RNAs and plays a role in the efficiency of mRNA splicing, processing and stability. Acts as a key regulator of exon-inclusion or exon-skipping during alternative splicing via interaction with mRNA splicing factors SRSF3 and SRSF10. Specifically binds m6A-containing mRNAs and promotes recruitment of SRSF3 to its mRNA-binding elements adjacent to m6A sites, leading to exon-inclusion during alternative splicing. In contrast, interaction with SRSF3 prevents interaction with SRSF10, a splicing factor that promotes exon skipping: this prevents SRSF10 from binding to its mRNA-binding sites close to m6A-containing regions, leading to inhibit exon skipping during alternative splicing. May also regulate alternative splice site selection. Also involved in nuclear export of m6A-containing mRNAs via interaction with SRSF3: interaction with SRSF3 facilitates m6A-containing mRNA-binding to both SRSF3 and NXF1, promoting mRNA nuclear export. Involved in S-adenosyl-L-methionine homeostasis by regulating expression of MAT2A transcripts, probably by binding m6A-containing MAT2A mRNAs. Also recognizes and binds m6A on other RNA molecules. Involved in random X inactivation mediated by Xist RNA: recognizes and binds m6A-containing Xist and promotes transcription repression activity of Xist. Also recognizes and binds m6A-containing single-stranded DNA. Involved in germline development: required for spermatogonial development in males and oocyte growth and maturation in females, probably via its role in alternative splicing. This is YTH domain-containing protein 1 (Ythdc1) from Rattus norvegicus (Rat).